The primary structure comprises 76 residues: Waprin-Rha1 (76 aa).

A signal peptide spans 1–24; the sequence is MQARVFLLLLGVILLGMMGPMVSA. A WAP domain is found at 25-75; that stretch reads QDGKAGSCPDVNQPIPPLGVCKTTCATDSNCPDIQKCCKNGCGHMSCTRPS. Disulfide bonds link C32–C62, C45–C66, C49–C61, and C55–C71.

This sequence belongs to the venom waprin family. As to expression, expressed by the venom gland.

The protein resides in the secreted. Damages membranes of susceptible bacteria. Has no hemolytic activity. Not toxic to mice. Does not inhibit the proteinases elastase and cathepsin G. In Rhabdophis tigrinus tigrinus (Tiger keelback snake), this protein is Waprin-Rha1.